Here is a 104-residue protein sequence, read N- to C-terminus: Small ribosomal subunit protein uS10 (104 aa).

It belongs to the universal ribosomal protein uS10 family. Part of the 30S ribosomal subunit.

Functionally, involved in the binding of tRNA to the ribosomes. The protein is Small ribosomal subunit protein uS10 of Ralstonia nicotianae (strain ATCC BAA-1114 / GMI1000) (Ralstonia solanacearum).